The sequence spans 349 residues: Green-sensitive opsin-1 (349 aa).

Topologically, residues 1-36 (MNGTEGSNFYIPMSNRTGLVRSPYDYTQYYLAEPWK) are extracellular. N2 and N15 each carry an N-linked (GlcNAc...) asparagine glycan. The chain crosses the membrane as a helical span at residues 37-61 (FKALAFYMFLLIIFGFPINVLTLVV). Residues 62-73 (TAQHKKLRQPLN) are Cytoplasmic-facing. A helical membrane pass occupies residues 74–99 (YILVNLAFAGTIMVIFGFTVSFYCSL). The Extracellular segment spans residues 100–113 (VGYMALGPLGCVME). The cysteines at positions 110 and 187 are disulfide-linked. Residues 114 to 133 (GFFATLGGQVALWSLVVLAI) form a helical membrane-spanning segment. Over 134 to 152 (ERYIVVCKPMGSFKFSANH) the chain is Cytoplasmic. The helical transmembrane segment at 153–176 (AMAGIAFTWFMACSCAVPPLFGWS) threads the bilayer. The Extracellular portion of the chain corresponds to 177–202 (RYLPEGMQTSCGPDYYTLNPEYNNES). N200 carries an N-linked (GlcNAc...) asparagine glycan. Residues 203–230 (YVMYMFSCHFCIPVTTIFFTYGSLVCTV) form a helical membrane-spanning segment. Residues 231–252 (KAAAAQQQESESTQKAEREVTR) lie on the Cytoplasmic side of the membrane. Residues 253–276 (MVILMVLGFLFAWVPYASFAAWIF) form a helical membrane-spanning segment. Over 277 to 284 (FNRGAAFS) the chain is Extracellular. The helical transmembrane segment at 285–309 (AQAMAVPAFFSKTSAVFNPIIYVLL) threads the bilayer. Residue K296 is modified to N6-(retinylidene)lysine. The Cytoplasmic segment spans residues 310 to 349 (NKQFRSCMLNTLFCGKSPLGDDESSSVSTSKTEVSSVSPA). The interval 328–349 (LGDDESSSVSTSKTEVSSVSPA) is disordered. The span at 334–349 (SSVSTSKTEVSSVSPA) shows a compositional bias: low complexity.

The protein belongs to the G-protein coupled receptor 1 family. Opsin subfamily. Phosphorylated on some or all of the serine and threonine residues present in the C-terminal region. Retinal double cone accessory photoreceptor cell outer segments.

The protein localises to the membrane. In terms of biological role, visual pigments are the light-absorbing molecules that mediate vision. They consist of an apoprotein, opsin, covalently linked to cis-retinal. This is Green-sensitive opsin-1 (opn1mw1) from Danio rerio (Zebrafish).